We begin with the raw amino-acid sequence, 299 residues long: Porphobilinogen deaminase (299 aa).

S-(dipyrrolylmethanemethyl)cysteine is present on Cys242.

Belongs to the HMBS family. Monomer. The cofactor is dipyrromethane.

The catalysed reaction is 4 porphobilinogen + H2O = hydroxymethylbilane + 4 NH4(+). Its pathway is porphyrin-containing compound metabolism; protoporphyrin-IX biosynthesis; coproporphyrinogen-III from 5-aminolevulinate: step 2/4. In terms of biological role, tetrapolymerization of the monopyrrole PBG into the hydroxymethylbilane pre-uroporphyrinogen in several discrete steps. The protein is Porphobilinogen deaminase of Rickettsia typhi (strain ATCC VR-144 / Wilmington).